Consider the following 188-residue polypeptide: Pyridoxal 5'-phosphate synthase subunit PdxT (188 aa).

46–48 (GES) is an L-glutamine binding site. Cys-78 (nucleophile) is an active-site residue. Residues Arg-105 and 134-135 (IR) contribute to the L-glutamine site. Catalysis depends on charge relay system residues His-170 and Glu-172.

The protein belongs to the glutaminase PdxT/SNO family. In the presence of PdxS, forms a dodecamer of heterodimers. Only shows activity in the heterodimer.

It carries out the reaction aldehydo-D-ribose 5-phosphate + D-glyceraldehyde 3-phosphate + L-glutamine = pyridoxal 5'-phosphate + L-glutamate + phosphate + 3 H2O + H(+). It catalyses the reaction L-glutamine + H2O = L-glutamate + NH4(+). It participates in cofactor biosynthesis; pyridoxal 5'-phosphate biosynthesis. Its function is as follows. Catalyzes the hydrolysis of glutamine to glutamate and ammonia as part of the biosynthesis of pyridoxal 5'-phosphate. The resulting ammonia molecule is channeled to the active site of PdxS. The sequence is that of Pyridoxal 5'-phosphate synthase subunit PdxT from Moorella thermoacetica (strain ATCC 39073 / JCM 9320).